A 68-amino-acid polypeptide reads, in one-letter code: UPF0352 protein CPS_2611 (68 aa).

Belongs to the UPF0352 family.

This chain is UPF0352 protein CPS_2611, found in Colwellia psychrerythraea (strain 34H / ATCC BAA-681) (Vibrio psychroerythus).